The sequence spans 262 residues: Phosphonates import ATP-binding protein PhnC (262 aa).

One can recognise an ABC transporter domain in the interval 5–253 (IRVEKLAKTF…RFDHLYRSIN (249 aa)). 37 to 44 (GPSGSGKS) serves as a coordination point for ATP.

It belongs to the ABC transporter superfamily. Phosphonates importer (TC 3.A.1.9.1) family. In terms of assembly, the complex is composed of two ATP-binding proteins (PhnC), two transmembrane proteins (PhnE) and a solute-binding protein (PhnD).

Its subcellular location is the cell inner membrane. It catalyses the reaction phosphonate(out) + ATP + H2O = phosphonate(in) + ADP + phosphate + H(+). Its function is as follows. Part of the ABC transporter complex PhnCDE involved in phosphonates import. Responsible for energy coupling to the transport system. The protein is Phosphonates import ATP-binding protein PhnC of Shigella dysenteriae serotype 1 (strain Sd197).